Consider the following 422-residue polypeptide: Protein king tubby 2 (422 aa).

Positions 49–169 are disordered; the sequence is PSNPDQIISS…ASGHNDAEGD (121 aa). A compositionally biased stretch (low complexity) spans 57–81; it reads SSGSPTTVTATGTTTGSVTTTPTSP.

This sequence belongs to the TUB family.

The protein resides in the cytoplasm. Its subcellular location is the nucleus. The chain is Protein king tubby 2 (king-tubby2) from Culex quinquefasciatus (Southern house mosquito).